Here is a 420-residue protein sequence, read N- to C-terminus: Small ribosomal subunit protein mS75 (420 aa).

Residues 1–11 (MYNLSRIIYRF) constitute a mitochondrion transit peptide. Disordered stretches follow at residues 99–120 (RQKNAANPSSDNTPSDSGDVMS) and 390–420 (RYSPANQKRRSKRKQKRKERRIACLKAGKQT). Residues 102–114 (NAANPSSDNTPSD) are compositionally biased toward polar residues. The segment covering 396–409 (QKRRSKRKQKRKER) has biased composition (basic residues).

As to quaternary structure, component of the mitochondrial ribosome small subunit. In terms of tissue distribution, expressed at high levels in reproductive organs and, at lower levels, ubiquitously.

The protein localises to the mitochondrion. Functionally, essential for fertility (male and female gametophyte functions and development). Required for the integrity of female gametic mitochondria. Modulates male gametophyte functions, including pollen tube growth and style penetration. Involved in mitochondrial-driven cell-to-cell communication in embryo sacs during female gametes maturation (including embryogenesis initiation and endosperm development), especially for reciprocal signaling between central and egg cells which regulates reciprocal development. The polypeptide is Small ribosomal subunit protein mS75 (Arabidopsis thaliana (Mouse-ear cress)).